The chain runs to 163 residues: Transcription antitermination protein NusB (163 aa).

It belongs to the NusB family.

Its function is as follows. Involved in transcription antitermination. Required for transcription of ribosomal RNA (rRNA) genes. Binds specifically to the boxA antiterminator sequence of the ribosomal RNA (rrn) operons. The sequence is that of Transcription antitermination protein NusB from Granulibacter bethesdensis (strain ATCC BAA-1260 / CGDNIH1).